Here is a 216-residue protein sequence, read N- to C-terminus: 4-hydroxy-tetrahydrodipicolinate reductase (216 aa).

Residues 7–12 (GYSGRM), 71–73 (GTT), and 95–98 (AYNF) contribute to the NAD(+) site. The active-site Proton donor/acceptor is His127. His128 contributes to the (S)-2,3,4,5-tetrahydrodipicolinate binding site. Lys131 (proton donor) is an active-site residue. 137–138 (GT) provides a ligand contact to (S)-2,3,4,5-tetrahydrodipicolinate.

Belongs to the DapB family.

It is found in the cytoplasm. It carries out the reaction (S)-2,3,4,5-tetrahydrodipicolinate + NAD(+) + H2O = (2S,4S)-4-hydroxy-2,3,4,5-tetrahydrodipicolinate + NADH + H(+). It catalyses the reaction (S)-2,3,4,5-tetrahydrodipicolinate + NADP(+) + H2O = (2S,4S)-4-hydroxy-2,3,4,5-tetrahydrodipicolinate + NADPH + H(+). It participates in amino-acid biosynthesis; L-lysine biosynthesis via DAP pathway; (S)-tetrahydrodipicolinate from L-aspartate: step 4/4. Catalyzes the conversion of 4-hydroxy-tetrahydrodipicolinate (HTPA) to tetrahydrodipicolinate. This chain is 4-hydroxy-tetrahydrodipicolinate reductase, found in Thermotoga sp. (strain RQ2).